Consider the following 121-residue polypeptide: Small ribosomal subunit protein uS13 (121 aa).

The tract at residues 91–121 (HRRGLPVRGQNSKNNARTRKGPRRTVANKKK) is disordered. A compositionally biased stretch (basic residues) spans 106 to 121 (ARTRKGPRRTVANKKK).

The protein belongs to the universal ribosomal protein uS13 family. In terms of assembly, part of the 30S ribosomal subunit. Forms a loose heterodimer with protein S19. Forms two bridges to the 50S subunit in the 70S ribosome.

Functionally, located at the top of the head of the 30S subunit, it contacts several helices of the 16S rRNA. In the 70S ribosome it contacts the 23S rRNA (bridge B1a) and protein L5 of the 50S subunit (bridge B1b), connecting the 2 subunits; these bridges are implicated in subunit movement. Contacts the tRNAs in the A and P-sites. In Bacillus cereus (strain G9842), this protein is Small ribosomal subunit protein uS13.